Consider the following 205-residue polypeptide: Ribonuclease HII (205 aa).

Residues 16 to 205 enclose the RNase H type-2 domain; sequence VSEVGIDEVG…KSFLKKSKLI (190 aa). Residues aspartate 22, glutamate 23, and aspartate 118 each contribute to the a divalent metal cation site.

This sequence belongs to the RNase HII family. Requires Mn(2+) as cofactor. Mg(2+) is required as a cofactor.

It localises to the cytoplasm. It catalyses the reaction Endonucleolytic cleavage to 5'-phosphomonoester.. Endonuclease that specifically degrades the RNA of RNA-DNA hybrids. This Prochlorococcus marinus (strain AS9601) protein is Ribonuclease HII.